The chain runs to 137 residues: Large ribosomal subunit protein uL16 (137 aa).

The protein belongs to the universal ribosomal protein uL16 family. As to quaternary structure, part of the 50S ribosomal subunit.

Binds 23S rRNA and is also seen to make contacts with the A and possibly P site tRNAs. The protein is Large ribosomal subunit protein uL16 of Paracoccus denitrificans (strain Pd 1222).